Here is a 263-residue protein sequence, read N- to C-terminus: 3-deoxy-manno-octulosonate cytidylyltransferase 1 (263 aa).

Belongs to the KdsB family.

It localises to the cytoplasm. The enzyme catalyses 3-deoxy-alpha-D-manno-oct-2-ulosonate + CTP = CMP-3-deoxy-beta-D-manno-octulosonate + diphosphate. The protein operates within nucleotide-sugar biosynthesis; CMP-3-deoxy-D-manno-octulosonate biosynthesis; CMP-3-deoxy-D-manno-octulosonate from 3-deoxy-D-manno-octulosonate and CTP: step 1/1. It participates in bacterial outer membrane biogenesis; lipopolysaccharide biosynthesis. Its function is as follows. Activates KDO (a required 8-carbon sugar) for incorporation into bacterial lipopolysaccharide in Gram-negative bacteria. The chain is 3-deoxy-manno-octulosonate cytidylyltransferase 1 from Burkholderia ambifaria (strain ATCC BAA-244 / DSM 16087 / CCUG 44356 / LMG 19182 / AMMD) (Burkholderia cepacia (strain AMMD)).